We begin with the raw amino-acid sequence, 412 residues long: MQPWSSVPVPKVPGTARPLRLFDTAAGEVRPVTAGRTARMYVCGITPYDATHLGHAATYLAFDLVHRIWLDNGHDVHYVQNVTDIDDPLLERANRDNEDWVVLAMRETALFREDMEALRVVPPTDFIGAVESIPEIEEAVGKLLASGAAYRVDDDEYPDVYFRHSATGRFGYESNYDEATMLDLSAERGGDPDRKGKEHPLDALLWRMARDGEPSWESELGPGRPGWHLECSVIALNRLGMGFDVQGGGSDLAFPHHEFSAAHAEALAGDHPFARHYCHAGMIGLDGEKMSKSKGNLVFVSRLRGDRVDPMAIRLALLDGHYRSDRSWTADALTKGSARLARWREAVALEAGPSAEPVVERLRDRLSDDLDTERALLAVDAWVDEALCRRGGDAEAPAAIRDAVDGLLGVQL.

Cys43 lines the Zn(2+) pocket. L-cysteinyl-5'-AMP contacts are provided by residues 43–46 (CGIT), Thr58, and 81–83 (NVT). Positions 45–55 (ITPYDATHLGH) match the 'HIGH' region motif. The short motif at 187-192 (ERGGDP) is the 'ERGGDP' region element. Residue Trp227 participates in L-cysteinyl-5'-AMP binding. Cys231 contributes to the Zn(2+) binding site. Position 249 to 251 (249 to 251 (GSD)) interacts with L-cysteinyl-5'-AMP. Zn(2+) is bound at residue His256. Ile283 serves as a coordination point for L-cysteinyl-5'-AMP. The short motif at 289-293 (KMSKS) is the 'KMSKS' region element.

Belongs to the class-I aminoacyl-tRNA synthetase family. MshC subfamily. As to quaternary structure, monomer. Requires Zn(2+) as cofactor.

The catalysed reaction is 1D-myo-inositol 2-amino-2-deoxy-alpha-D-glucopyranoside + L-cysteine + ATP = 1D-myo-inositol 2-(L-cysteinylamino)-2-deoxy-alpha-D-glucopyranoside + AMP + diphosphate + H(+). Its function is as follows. Catalyzes the ATP-dependent condensation of GlcN-Ins and L-cysteine to form L-Cys-GlcN-Ins. This chain is L-cysteine:1D-myo-inositol 2-amino-2-deoxy-alpha-D-glucopyranoside ligase, found in Saccharopolyspora erythraea (strain ATCC 11635 / DSM 40517 / JCM 4748 / NBRC 13426 / NCIMB 8594 / NRRL 2338).